The sequence spans 342 residues: A-type ATP synthase subunit C (342 aa).

Belongs to the V-ATPase V0D/AC39 subunit family. In terms of assembly, has multiple subunits with at least A(3), B(3), C, D, E, F, H, I and proteolipid K(x).

It localises to the cell membrane. Functionally, component of the A-type ATP synthase that produces ATP from ADP in the presence of a proton gradient across the membrane. In Archaeoglobus fulgidus (strain ATCC 49558 / DSM 4304 / JCM 9628 / NBRC 100126 / VC-16), this protein is A-type ATP synthase subunit C.